Reading from the N-terminus, the 541-residue chain is uncharacterized protein (541 aa).

Its subcellular location is the virion. This is an uncharacterized protein from Acanthamoeba polyphaga mimivirus (APMV).